The sequence spans 152 residues: Globin, minor (152 aa).

The Globin domain maps to 12–152 (VNNSYHKDLL…ALIAVVQAAL (141 aa)). His104 contacts heme b.

The protein belongs to the globin family.

The sequence is that of Globin, minor from Anadara trapezia (Sydney cockle).